Reading from the N-terminus, the 196-residue chain is ATP-dependent Clp protease proteolytic subunit (196 aa).

The active-site Nucleophile is the Ser96. His121 is a catalytic residue.

Belongs to the peptidase S14 family. In terms of assembly, fourteen ClpP subunits assemble into 2 heptameric rings which stack back to back to give a disk-like structure with a central cavity, resembling the structure of eukaryotic proteasomes.

Its subcellular location is the cytoplasm. The enzyme catalyses Hydrolysis of proteins to small peptides in the presence of ATP and magnesium. alpha-casein is the usual test substrate. In the absence of ATP, only oligopeptides shorter than five residues are hydrolyzed (such as succinyl-Leu-Tyr-|-NHMec, and Leu-Tyr-Leu-|-Tyr-Trp, in which cleavage of the -Tyr-|-Leu- and -Tyr-|-Trp bonds also occurs).. Its function is as follows. Cleaves peptides in various proteins in a process that requires ATP hydrolysis. Has a chymotrypsin-like activity. Plays a major role in the degradation of misfolded proteins. In Streptococcus mutans serotype c (strain ATCC 700610 / UA159), this protein is ATP-dependent Clp protease proteolytic subunit.